The primary structure comprises 305 residues: Tyrosine recombinase XerC (305 aa).

Residues T4–E95 enclose the Core-binding (CB) domain. In terms of domain architecture, Tyr recombinase spans L116–T298. Residues R159, K182, H250, R253, and H276 contribute to the active site. Y285 functions as the O-(3'-phospho-DNA)-tyrosine intermediate in the catalytic mechanism.

The protein belongs to the 'phage' integrase family. XerC subfamily. Forms a cyclic heterotetrameric complex composed of two molecules of XerC and two molecules of XerD.

The protein resides in the cytoplasm. Functionally, site-specific tyrosine recombinase, which acts by catalyzing the cutting and rejoining of the recombining DNA molecules. The XerC-XerD complex is essential to convert dimers of the bacterial chromosome into monomers to permit their segregation at cell division. It also contributes to the segregational stability of plasmids. The polypeptide is Tyrosine recombinase XerC (Rickettsia rickettsii (strain Iowa)).